The sequence spans 200 residues: Protein GrpE (200 aa).

A compositionally biased stretch (basic and acidic residues) spans 1–10 (MQEKDSKDVT). Positions 1 to 57 (MQEKDSKDVTMEDEETIASQEEIEVEGNSEESSKEEESNNSEISDENLSEENLKLKD) are disordered. A compositionally biased stretch (acidic residues) spans 11-29 (MEDEETIASQEEIEVEGNS).

Belongs to the GrpE family. In terms of assembly, homodimer.

It localises to the cytoplasm. Its function is as follows. Participates actively in the response to hyperosmotic and heat shock by preventing the aggregation of stress-denatured proteins, in association with DnaK and GrpE. It is the nucleotide exchange factor for DnaK and may function as a thermosensor. Unfolded proteins bind initially to DnaJ; upon interaction with the DnaJ-bound protein, DnaK hydrolyzes its bound ATP, resulting in the formation of a stable complex. GrpE releases ADP from DnaK; ATP binding to DnaK triggers the release of the substrate protein, thus completing the reaction cycle. Several rounds of ATP-dependent interactions between DnaJ, DnaK and GrpE are required for fully efficient folding. This Clostridium acetobutylicum (strain ATCC 824 / DSM 792 / JCM 1419 / IAM 19013 / LMG 5710 / NBRC 13948 / NRRL B-527 / VKM B-1787 / 2291 / W) protein is Protein GrpE.